Reading from the N-terminus, the 117-residue chain is Probable non-functional T cell receptor gamma variable (117 aa).

The signal sequence occupies residues 1-20; the sequence is MRWALAVLLAFLSPASQISS. The Ig-like domain maps to 21–117; it reads NLEGRTKSVT…GFYYCATWDR (97 aa). Residues cysteine 41 and cysteine 112 are joined by a disulfide bond. Asparagine 105 carries N-linked (GlcNAc...) asparagine glycosylation.

In terms of assembly, gamma-delta TR is a heterodimer composed of a gamma and delta chain; disulfide-linked. The gamma-delta TR is associated with the transmembrane signaling CD3 coreceptor proteins following the stoichiometry: a single gamma-delta TR heterodimer associates with one CD3D-CD3E heterodimer, one CD3G-CD3E heterodimer and one CD247 homodimer forming a stable octameric structure. Upon activation, gamma-delta TR complex associates with FCER1G to initiate intracellular signaling.

The protein resides in the cell membrane. Functionally, probable non-functional open reading frame (ORF) of V region of the variable domain of T cell receptor (TR) gamma chain. Non-functional ORF generally cannot participate in the synthesis of a productive T cell receptor (TR) chain due to altered V-(D)-J or switch recombination and/or splicing site (at mRNA level) and/or conserved amino acid change (protein level). Gamma-delta TRs recognize a variety of self and foreign non-peptide antigens frequently expressed at the epithelial boundaries between the host and external environment, including endogenous lipids presented by MH-like protein CD1D and phosphoantigens presented by butyrophilin-like molecule BTN3A1. Upon antigen recognition induces rapid, innate-like immune responses involved in pathogen clearance and tissue repair. Binding of gamma-delta TR complex to antigen triggers phosphorylation of immunoreceptor tyrosine-based activation motifs (ITAMs) in the CD3 chains by the LCK and FYN kinases, allowing the recruitment, phosphorylation, and activation of ZAP70 that facilitates phosphorylation of the scaffolding proteins LCP2 and LAT. This lead to the formation of a supramolecular signalosome that recruits the phospholipase PLCG1, resulting in calcium mobilization and ERK activation, ultimately leading to T cell expansion and differentiation into effector cells. Gamma-delta TRs are produced through somatic rearrangement of a limited repertoire of variable (V), diversity (D), and joining (J) genes. The potential diversity of gamma-delta TRs is conferred by the unique ability to rearrange (D) genes in tandem and to utilize all three reading frames. The combinatorial diversity is considerably increased by the sequence exonuclease trimming and random nucleotide (N) region additions which occur during the V-(D)-J rearrangements. The polypeptide is Probable non-functional T cell receptor gamma variable (Homo sapiens (Human)).